The primary structure comprises 104 residues: uncharacterized protein (104 aa).

This is an uncharacterized protein from Acidianus two-tailed virus (ATV).